The sequence spans 267 residues: tRNA pseudouridine synthase A (267 aa).

Aspartate 53 (nucleophile) is an active-site residue. Substrate is bound at residue tyrosine 114.

This sequence belongs to the tRNA pseudouridine synthase TruA family. As to quaternary structure, homodimer.

It catalyses the reaction uridine(38/39/40) in tRNA = pseudouridine(38/39/40) in tRNA. In terms of biological role, formation of pseudouridine at positions 38, 39 and 40 in the anticodon stem and loop of transfer RNAs. This chain is tRNA pseudouridine synthase A, found in Chlamydia trachomatis serovar A (strain ATCC VR-571B / DSM 19440 / HAR-13).